The chain runs to 254 residues: uncharacterized protein (254 aa).

The protein belongs to the methyltransferase superfamily.

This is an uncharacterized protein from Mycobacterium bovis (strain ATCC BAA-935 / AF2122/97).